The sequence spans 105 residues: Iron-sulfur cluster assembly protein CyaY (105 aa).

The protein belongs to the frataxin family.

In terms of biological role, involved in iron-sulfur (Fe-S) cluster assembly. May act as a regulator of Fe-S biogenesis. The polypeptide is Iron-sulfur cluster assembly protein CyaY (Chromobacterium violaceum (strain ATCC 12472 / DSM 30191 / JCM 1249 / CCUG 213 / NBRC 12614 / NCIMB 9131 / NCTC 9757 / MK)).